The primary structure comprises 380 residues: 12-oxophytodienoate reductase 1 (380 aa).

FMN contacts are provided by residues 35 to 37, alanine 68, and glutamine 110; that span reads PLT. Residue 182-185 participates in substrate binding; the sequence is HGAH. The active-site Proton donor is the tyrosine 187. Residue arginine 234 coordinates FMN. Arginine 275 provides a ligand contact to substrate. FMN-binding positions include glycine 305 and 326–327; that span reads GR.

Belongs to the NADH:flavin oxidoreductase/NADH oxidase family. The cofactor is FMN.

It carries out the reaction (1S,2S)-OPC-8 + NADP(+) = (9S,13S,15Z)-12-oxophyto-10,15-dienoate + NADPH + H(+). It participates in lipid metabolism; oxylipin biosynthesis. In terms of biological role, probably involved in the biosynthesis or metabolism of oxylipin signaling molecules. In vitro, reduces cis(-)-12-oxophytodienoic acid (cis(-)-OPDA) and to cis(-)-OPC-8:0. In Oryza sativa subsp. japonica (Rice), this protein is 12-oxophytodienoate reductase 1.